The sequence spans 323 residues: tRNA U34 carboxymethyltransferase (323 aa).

Carboxy-S-adenosyl-L-methionine-binding positions include lysine 93, tryptophan 107, lysine 112, glycine 132, 154 to 156, 182 to 183, methionine 197, tyrosine 201, and arginine 316; these read DPS and VE.

The protein belongs to the class I-like SAM-binding methyltransferase superfamily. CmoB family. As to quaternary structure, homotetramer.

It catalyses the reaction carboxy-S-adenosyl-L-methionine + 5-hydroxyuridine(34) in tRNA = 5-carboxymethoxyuridine(34) in tRNA + S-adenosyl-L-homocysteine + H(+). In terms of biological role, catalyzes carboxymethyl transfer from carboxy-S-adenosyl-L-methionine (Cx-SAM) to 5-hydroxyuridine (ho5U) to form 5-carboxymethoxyuridine (cmo5U) at position 34 in tRNAs. The polypeptide is tRNA U34 carboxymethyltransferase (Pseudoalteromonas atlantica (strain T6c / ATCC BAA-1087)).